Reading from the N-terminus, the 292-residue chain is Glycine--tRNA ligase alpha subunit (292 aa).

This sequence belongs to the class-II aminoacyl-tRNA synthetase family. Tetramer of two alpha and two beta subunits.

Its subcellular location is the cytoplasm. It carries out the reaction tRNA(Gly) + glycine + ATP = glycyl-tRNA(Gly) + AMP + diphosphate. This is Glycine--tRNA ligase alpha subunit from Pelobacter propionicus (strain DSM 2379 / NBRC 103807 / OttBd1).